A 558-amino-acid polypeptide reads, in one-letter code: Protein shisa-7 (558 aa).

Residues 1–22 form the signal peptide; that stretch reads MPALLLLGTVALLASAAGPAGA. Topologically, residues 23 to 189 are extracellular; that stretch reads RPSNDTSSVA…GGEGPGGSTA (167 aa). A glycan (N-linked (GlcNAc...) asparagine) is linked at Asn26. 2 disordered regions span residues 53–79 and 142–181; these read GGSA…ARAP and TPPP…GRGG. Low complexity predominate over residues 57–77; that stretch reads AGTSANATKTSPASGTGAAAR. The segment covering 148-181 has biased composition (gly residues); it reads GGAGGAGGAGGGPGPGQAGWLEGGRAGGAGGRGG. The segment at 154-175 is GRID; sequence GGAGGGPGPGQAGWLEGGRAGG. A helical membrane pass occupies residues 190–210; the sequence is YVVCGVISFALAVGVGAKVAF. Topologically, residues 211 to 558 are cytoplasmic; that stretch reads SKASRAPRAH…RTASKNEVTV (348 aa). A disordered region spans residues 236-263; it reads QAGPATRPDRARSSSLTPGLGGPDSMAP. Position 438 is a phosphoserine (Ser438). Residues 443 to 506 form a disordered region; the sequence is RQSREHLLSP…HHHHALHGSP (64 aa). Residues 453–462 show a composition bias toward pro residues; it reads PRSPALPPDP. The span at 466 to 477 shows a compositional bias: low complexity; it reads ASLAASHSNLLL. Thr532 carries the post-translational modification Phosphothreonine. The PDZ-binding signature appears at 555–558; sequence EVTV.

The protein belongs to the shisa family. Interacts with GABA(A)R (GABA type A receptor) subunits GABRA1, GABRA2 and GABRG2; the interaction is direct. Does not interact with GABRB2 and GABRB3 subunits. Interacts with AMPAR subunits GRIA1, GRIA2 and GRIA3 and AMPAR auxiliary proteins SHISA6 and SHISA7 in heterologous cells. Interacts (via PDZ-binding motif) with DLG4/PSD-95 (via PDZ domain)in heterologous cells; the interaction is direct. In terms of processing, N-glycosylated. In terms of tissue distribution, mainly expressed in neurons. Highly expressed in brain structures including cortex, striatum, olfactory bulb, amygdala hippocampus CA1-3 and dentate gyrus (at protein level).

Its subcellular location is the postsynaptic density membrane. Its function is as follows. Transmembrane protein that regulates gamma-aminobutyric acid type A receptor (GABA(A)R) trafficking, channel deactivation kinetics and pharmacology, necessary for fast inhibitory transmission in the brain. Enhances the action of benzodiazepine, a primary GABA(A)Rs target drug, in the brain. May affect channel kinetics of AMPA-type glutamate receptors (AMPAR), the brain's main excitatory neurotransmitter, necessary for synaptic hippocampal plasticity, and memory recall. May regulate the induction and maintenance of long-term potentiation at Schaffer collaterals/CA3-CA1 excitatory synapses. The polypeptide is Protein shisa-7 (Mus musculus (Mouse)).